Reading from the N-terminus, the 343-residue chain is Hydroxycarboxylic acid receptor 1 (343 aa).

Residues 1–21 are Extracellular-facing; it reads MDNGSCCLIEGEPISQVMPPL. N-linked (GlcNAc...) asparagine glycosylation occurs at asparagine 3. The helical transmembrane segment at 22 to 42 threads the bilayer; that stretch reads LILVFVLGALGNGIALCGFCF. Over 43–49 the chain is Cytoplasmic; the sequence is HMKTWKS. The helical transmembrane segment at 50–70 threads the bilayer; that stretch reads STIYLFNLAVADFLLMICLPL. At 71–90 the chain is on the extracellular side; it reads RTDYYLRRRHWIFGDIACRL. An intrachain disulfide couples cysteine 88 to cysteine 165. Residues 91–111 traverse the membrane as a helical segment; the sequence is VLFKLAMNRAGSIVFLTVVAV. Residues 112–131 are Cytoplasmic-facing; it reads DRYFKVVHPHHMVNAISNRT. Residues 132–152 traverse the membrane as a helical segment; it reads AAATACVLWTLVILGTVYLLM. The Extracellular portion of the chain corresponds to 153 to 182; sequence ESHLCVQGTLSSCESFIMESANGWHDVMFQ. The helical transmembrane segment at 183 to 203 threads the bilayer; it reads LEFFLPLTIILFCSVNVVWSL. The Cytoplasmic segment spans residues 204–220; sequence RRRQQLTRQARMRRATR. A helical transmembrane segment spans residues 221–241; sequence FIMVVASVFITCYLPSVLARL. Residues 242 to 259 lie on the Extracellular side of the membrane; it reads YFLWTVPTSACDPSVHTA. A helical membrane pass occupies residues 260–280; that stretch reads LHVTLSFTYLNSMLDPLVYYF. The Cytoplasmic segment spans residues 281–343; that stretch reads SSPSLPKFYT…SDGQWDLQVC (63 aa). The segment covering 319–334 has biased composition (polar residues); the sequence is CSKSSIDGANRSQRPS. The interval 319-343 is disordered; that stretch reads CSKSSIDGANRSQRPSDGQWDLQVC.

This sequence belongs to the G-protein coupled receptor 1 family. As to expression, highly expressed in subcutaneous fat and omental fat and detectable in lower levels in brain and many other tissues. High levels detected in epididymal and subcutaneous fat with slightly lower in omental fat, low levels are detected in the brain, skeletal muscle, kidney, liver and the pancreas (at protein level).

The protein localises to the cell membrane. Its function is as follows. Acts as a receptor for L-lactate and mediates its anti-lipolytic effect through a G(i)-protein-mediated pathway. This chain is Hydroxycarboxylic acid receptor 1 (Hcar1), found in Mus musculus (Mouse).